The chain runs to 352 residues: Protein-glutamate methylesterase/protein-glutamine glutaminase 2 (352 aa).

The Response regulatory domain maps to 6–124; sequence KVLIVEDSLV…NAGYDTMAAK (119 aa). Aspartate 57 is modified (4-aspartylphosphate). Residues 162–343 form the CheB-type methylesterase domain; it reads PGTYSMVGIV…LPLPAIAARL (182 aa). Residues serine 173, histidine 200, and aspartate 292 contribute to the active site.

The protein belongs to the CheB family. Phosphorylated by CheA. Phosphorylation of the N-terminal regulatory domain activates the methylesterase activity.

It is found in the cytoplasm. It carries out the reaction [protein]-L-glutamate 5-O-methyl ester + H2O = L-glutamyl-[protein] + methanol + H(+). The enzyme catalyses L-glutaminyl-[protein] + H2O = L-glutamyl-[protein] + NH4(+). Its function is as follows. Involved in chemotaxis. Part of a chemotaxis signal transduction system that modulates chemotaxis in response to various stimuli. Catalyzes the demethylation of specific methylglutamate residues introduced into the chemoreceptors (methyl-accepting chemotaxis proteins or MCP) by CheR. Also mediates the irreversible deamidation of specific glutamine residues to glutamic acid. The polypeptide is Protein-glutamate methylesterase/protein-glutamine glutaminase 2 (Paramagnetospirillum magneticum (strain ATCC 700264 / AMB-1) (Magnetospirillum magneticum)).